We begin with the raw amino-acid sequence, 401 residues long: 1-deoxy-D-xylulose 5-phosphate reductoisomerase (401 aa).

Positions 10, 11, 12, 13, 36, 37, 38, and 124 each coordinate NADPH. K125 contributes to the 1-deoxy-D-xylulose 5-phosphate binding site. Residue E126 participates in NADPH binding. D150 contacts Mn(2+). The 1-deoxy-D-xylulose 5-phosphate site is built by S151, E152, S176, and H199. Residue E152 coordinates Mn(2+). Position 205 (G205) interacts with NADPH. The 1-deoxy-D-xylulose 5-phosphate site is built by S212, N217, K218, and E221. E221 is a binding site for Mn(2+).

Belongs to the DXR family. Requires Mg(2+) as cofactor. Mn(2+) serves as cofactor.

It carries out the reaction 2-C-methyl-D-erythritol 4-phosphate + NADP(+) = 1-deoxy-D-xylulose 5-phosphate + NADPH + H(+). It functions in the pathway isoprenoid biosynthesis; isopentenyl diphosphate biosynthesis via DXP pathway; isopentenyl diphosphate from 1-deoxy-D-xylulose 5-phosphate: step 1/6. Catalyzes the NADPH-dependent rearrangement and reduction of 1-deoxy-D-xylulose-5-phosphate (DXP) to 2-C-methyl-D-erythritol 4-phosphate (MEP). This is 1-deoxy-D-xylulose 5-phosphate reductoisomerase from Acaryochloris marina (strain MBIC 11017).